Reading from the N-terminus, the 211-residue chain is Octanoyltransferase (211 aa).

Residues 32-211 (DHEPEIIYLV…IQTEFNKIFK (180 aa)) form the BPL/LPL catalytic domain. Substrate is bound by residues 71 to 78 (RGGKFTFH), 145 to 147 (AIG), and 158 to 160 (GVA). The active-site Acyl-thioester intermediate is cysteine 176.

The protein belongs to the LipB family.

The protein localises to the cytoplasm. It catalyses the reaction octanoyl-[ACP] + L-lysyl-[protein] = N(6)-octanoyl-L-lysyl-[protein] + holo-[ACP] + H(+). Its pathway is protein modification; protein lipoylation via endogenous pathway; protein N(6)-(lipoyl)lysine from octanoyl-[acyl-carrier-protein]: step 1/2. Functionally, catalyzes the transfer of endogenously produced octanoic acid from octanoyl-acyl-carrier-protein onto the lipoyl domains of lipoate-dependent enzymes. Lipoyl-ACP can also act as a substrate although octanoyl-ACP is likely to be the physiological substrate. The polypeptide is Octanoyltransferase (Rickettsia massiliae (strain Mtu5)).